The primary structure comprises 143 residues: Anti-sigma F factor (143 aa).

It belongs to the anti-sigma-factor family.

The catalysed reaction is L-seryl-[protein] + ATP = O-phospho-L-seryl-[protein] + ADP + H(+). It carries out the reaction L-threonyl-[protein] + ATP = O-phospho-L-threonyl-[protein] + ADP + H(+). In terms of biological role, binds to sigma F and blocks its ability to form an RNA polymerase holoenzyme (E-sigma F). Phosphorylates SpoIIAA on a serine residue. This phosphorylation may enable SpoIIAA to act as an anti-anti-sigma factor that counteracts SpoIIAB and thus releases sigma F from inhibition. This Clostridium novyi (strain NT) protein is Anti-sigma F factor.